The chain runs to 307 residues: Methionyl-tRNA formyltransferase (307 aa).

108–111 (SLLP) is a (6S)-5,6,7,8-tetrahydrofolate binding site.

It belongs to the Fmt family.

It catalyses the reaction L-methionyl-tRNA(fMet) + (6R)-10-formyltetrahydrofolate = N-formyl-L-methionyl-tRNA(fMet) + (6S)-5,6,7,8-tetrahydrofolate + H(+). Attaches a formyl group to the free amino group of methionyl-tRNA(fMet). The formyl group appears to play a dual role in the initiator identity of N-formylmethionyl-tRNA by promoting its recognition by IF2 and preventing the misappropriation of this tRNA by the elongation apparatus. This chain is Methionyl-tRNA formyltransferase, found in Xylella fastidiosa (strain 9a5c).